The sequence spans 285 residues: NADPH-dependent 7-cyano-7-deazaguanine reductase (285 aa).

91-93 lines the substrate pocket; that stretch reads IES. 93 to 94 provides a ligand contact to NADPH; sequence SK. Cys-193 (thioimide intermediate) is an active-site residue. Asp-200 serves as the catalytic Proton donor. Position 232 to 233 (232 to 233) interacts with substrate; the sequence is HE. Residue 261–262 participates in NADPH binding; sequence RG.

It belongs to the GTP cyclohydrolase I family. QueF type 2 subfamily. Homodimer.

It is found in the cytoplasm. The enzyme catalyses 7-aminomethyl-7-carbaguanine + 2 NADP(+) = 7-cyano-7-deazaguanine + 2 NADPH + 3 H(+). It functions in the pathway tRNA modification; tRNA-queuosine biosynthesis. Catalyzes the NADPH-dependent reduction of 7-cyano-7-deazaguanine (preQ0) to 7-aminomethyl-7-deazaguanine (preQ1). In Shewanella baltica (strain OS223), this protein is NADPH-dependent 7-cyano-7-deazaguanine reductase.